A 111-amino-acid chain; its full sequence is Putative pterin-4-alpha-carbinolamine dehydratase (111 aa).

This sequence belongs to the pterin-4-alpha-carbinolamine dehydratase family.

It catalyses the reaction (4aS,6R)-4a-hydroxy-L-erythro-5,6,7,8-tetrahydrobiopterin = (6R)-L-erythro-6,7-dihydrobiopterin + H2O. This is Putative pterin-4-alpha-carbinolamine dehydratase from Marinobacter nauticus (strain ATCC 700491 / DSM 11845 / VT8) (Marinobacter aquaeolei).